We begin with the raw amino-acid sequence, 547 residues long: Chaperonin GroEL (547 aa).

Residues 30-33, K51, 87-91, G415, and D495 each bind ATP; these read TLGP and DGTTT.

It belongs to the chaperonin (HSP60) family. Forms a cylinder of 14 subunits composed of two heptameric rings stacked back-to-back. Interacts with the co-chaperonin GroES.

It is found in the cytoplasm. It carries out the reaction ATP + H2O + a folded polypeptide = ADP + phosphate + an unfolded polypeptide.. Functionally, together with its co-chaperonin GroES, plays an essential role in assisting protein folding. The GroEL-GroES system forms a nano-cage that allows encapsulation of the non-native substrate proteins and provides a physical environment optimized to promote and accelerate protein folding. This is Chaperonin GroEL from Pasteurella multocida (strain Pm70).